A 64-amino-acid polypeptide reads, in one-letter code: Large ribosomal subunit protein bL33 (64 aa).

Belongs to the bacterial ribosomal protein bL33 family.

This is Large ribosomal subunit protein bL33 from Synechococcus sp. (strain JA-2-3B'a(2-13)) (Cyanobacteria bacterium Yellowstone B-Prime).